Here is a 427-residue protein sequence, read N- to C-terminus: Transcription termination factor Rho (427 aa).

Residues 55 to 130 (YFFGEGVLEI…IKIEAINYRP (76 aa)) enclose the Rho RNA-BD domain. ATP is bound by residues 173-178 (GKGQRG), 185-190 (KAGKTT), and R216.

Belongs to the Rho family. Homohexamer. The homohexamer assembles into an open ring structure.

Facilitates transcription termination by a mechanism that involves Rho binding to the nascent RNA, activation of Rho's RNA-dependent ATPase activity, and release of the mRNA from the DNA template. The protein is Transcription termination factor Rho of Thermotoga maritima (strain ATCC 43589 / DSM 3109 / JCM 10099 / NBRC 100826 / MSB8).